The primary structure comprises 438 residues: Aspartate--tRNA(Asp/Asn) ligase (438 aa).

Residue E176 participates in L-aspartate binding. The aspartate stretch occupies residues 198 to 201 (QLYK). An L-aspartate-binding site is contributed by R220. Residues 220–222 (RAE), 228–230 (RHL), and E361 contribute to the ATP site. Mg(2+) is bound by residues E361 and S364. L-aspartate is bound by residues S364 and R368. Position 409-412 (409-412 (GADR)) interacts with ATP.

The protein belongs to the class-II aminoacyl-tRNA synthetase family. Type 2 subfamily. As to quaternary structure, homodimer. Mg(2+) is required as a cofactor.

The protein localises to the cytoplasm. It carries out the reaction tRNA(Asx) + L-aspartate + ATP = L-aspartyl-tRNA(Asx) + AMP + diphosphate. Aspartyl-tRNA synthetase with relaxed tRNA specificity since it is able to aspartylate not only its cognate tRNA(Asp) but also tRNA(Asn). Reaction proceeds in two steps: L-aspartate is first activated by ATP to form Asp-AMP and then transferred to the acceptor end of tRNA(Asp/Asn). In Methanococcus maripaludis (strain C6 / ATCC BAA-1332), this protein is Aspartate--tRNA(Asp/Asn) ligase.